We begin with the raw amino-acid sequence, 246 residues long: Uroporphyrinogen-III synthase (246 aa).

It belongs to the uroporphyrinogen-III synthase family. As to quaternary structure, monomer.

It carries out the reaction hydroxymethylbilane = uroporphyrinogen III + H2O. It functions in the pathway porphyrin-containing compound metabolism; protoporphyrin-IX biosynthesis; coproporphyrinogen-III from 5-aminolevulinate: step 3/4. Catalyzes cyclization of the linear tetrapyrrole, hydroxymethylbilane, to the macrocyclic uroporphyrinogen III. The chain is Uroporphyrinogen-III synthase (hemD) from Escherichia coli (strain K12).